The chain runs to 424 residues: CAAX prenyl protease 1 homolog (424 aa).

Helical transmembrane passes span 3–23, 67–87, 109–129, 155–175, and 185–205; these read IPFMETVVGFMIVMYIFETYL, EFVTILMDSAILFFGILPWFW, LSFLAGVMTWSQITDLPFSLY, GTFLSVILGPPIVAAIIFIVQ, and LWAFMFILSLVMMTIYPVLIA. Residue His-284 coordinates Zn(2+). Glu-285 is a catalytic residue. His-288 is a Zn(2+) binding site. A run of 2 helical transmembrane segments spans residues 295 to 315 and 332 to 352; these read TYSFIAVQILAFLQFGGYTLV and VLIGLIIFQHTVIPLQHLVSF. Glu-362 provides a ligand contact to Zn(2+). Asp-366 serves as the catalytic Proton donor.

The protein belongs to the peptidase M48A family. Zn(2+) serves as cofactor. Expressed in leaves, stems and flowers.

The protein resides in the endoplasmic reticulum membrane. It carries out the reaction Hydrolyzes the peptide bond -P2-(S-farnesyl or geranylgeranyl)C-P1'-P2'-P3'-COOH where P1' and P2' are amino acids with aliphatic side chains and P3' is any C-terminal residue.. Proteolytically removes the C-terminal three residues of farnesylated proteins. The substrate specificity is only partially overlapping with that of FACE2. The sequence is that of CAAX prenyl protease 1 homolog (FACE1) from Arabidopsis thaliana (Mouse-ear cress).